The chain runs to 418 residues: Cytochrome P450 monooxygenase ABA2 (418 aa).

Cysteine 355 provides a ligand contact to heme.

Belongs to the cytochrome P450 family. It depends on heme as a cofactor.

It functions in the pathway hormone biosynthesis. Functionally, cytochrome P450 monooxygenase involved in the biosynthesis of abscisic acid (ABA), a phytohormone that acts antagonistically toward salicylic acid (SA), jasmonic acid (JA) and ethylene (ETH) signaling, to impede plant defense responses. During pathogen-host interaction, ABA plays a dual role in disease severity by increasing plant susceptibility and accelerating pathogenesis in the fungus itself. The first step of the pathway catalyzes the reaction from farnesyl diphosphate to alpha-ionylideneethane performed by the alpha-ionylideneethane synthase ABA3 via a three-step reaction mechanism involving 2 neutral intermediates, beta-farnesene and allofarnesene. The cytochrome P450 monooxygenase ABA1 might then be involved in the conversion of alpha-ionylideneethane to alpha-ionylideneacetic acid. Alpha-ionylideneacetic acid is further converted to abscisic acid in 2 steps involving the cytochrome P450 monooxygenase ABA2 and the short-chain dehydrogenase/reductase ABA4, via the intermediates 1'-deoxy-ABA or 1',4'-trans-diol-ABA, depending on the order of action of these 2 enzymes. ABA2 is responsible for the hydroxylation of carbon atom C-1' and ABA4 might be involved in the oxidation of the C-4' carbon atom. In Pyricularia oryzae (strain Y34) (Rice blast fungus), this protein is Cytochrome P450 monooxygenase ABA2.